Reading from the N-terminus, the 502-residue chain is 4,4'-diapophytoene desaturase (4,4'-diaponeurosporene-forming) (502 aa).

Residue 5 to 17 (VIGAGVTGLAAAA) participates in FAD binding.

This sequence belongs to the carotenoid/retinoid oxidoreductase family. CrtN subfamily.

It carries out the reaction 15-cis-4,4'-diapophytoene + 3 FAD + 3 H(+) = all-trans-4,4'-diaponeurosporene + 3 FADH2. It participates in carotenoid biosynthesis; staphyloxanthin biosynthesis; staphyloxanthin from farnesyl diphosphate: step 2/5. Its function is as follows. Involved in the biosynthesis of the yellow-orange carotenoid staphyloxanthin, which plays a role in the virulence via its protective function against oxidative stress. Catalyzes three successive dehydrogenation reactions that lead to the introduction of three double bonds into 4,4'-diapophytoene (dehydrosqualene), with 4,4'-diapophytofluene and 4,4'-diapo-zeta-carotene as intermediates, and 4,4'-diaponeurosporene (the major deep-yellow pigment in staphylococci strains) as the end product. The polypeptide is 4,4'-diapophytoene desaturase (4,4'-diaponeurosporene-forming) (Staphylococcus aureus (strain MW2)).